A 438-amino-acid polypeptide reads, in one-letter code: Tyrosine--tRNA ligase (438 aa).

Tyr-47 contacts L-tyrosine. Positions 52–61 match the 'HIGH' region motif; the sequence is PTATSLHVGG. L-tyrosine is bound by residues Tyr-183 and Gln-187. The short motif at 243-247 is the 'KMSKS' region element; sequence KMGKT. An ATP-binding site is contributed by Lys-246. The S4 RNA-binding domain maps to 370-436; sequence LWIVEALQTA…GKRKYALLKI (67 aa).

Belongs to the class-I aminoacyl-tRNA synthetase family. TyrS type 1 subfamily. In terms of assembly, homodimer.

Its subcellular location is the cytoplasm. It catalyses the reaction tRNA(Tyr) + L-tyrosine + ATP = L-tyrosyl-tRNA(Tyr) + AMP + diphosphate + H(+). In terms of biological role, catalyzes the attachment of tyrosine to tRNA(Tyr) in a two-step reaction: tyrosine is first activated by ATP to form Tyr-AMP and then transferred to the acceptor end of tRNA(Tyr). The polypeptide is Tyrosine--tRNA ligase (Rhodopirellula baltica (strain DSM 10527 / NCIMB 13988 / SH1)).